The chain runs to 153 residues: Insulin-like growth factor 1 (153 aa).

Residues 49-77 are b; the sequence is GPETLCGAELVDALQFVCGDRGFYFSKPT. Disulfide bonds link Cys-54/Cys-96, Cys-66/Cys-109, and Cys-95/Cys-100. The tract at residues 78-89 is c; the sequence is GYGSSSRRLHHK. The tract at residues 90-110 is a; that stretch reads GIVDECCFQSCDLRRLEMYCA. The d stretch occupies residues 111–118; the sequence is PIKPPKSA. Residues 119-153 constitute a propeptide, e peptide; sequence RSVRAQRHTDMPKAQKEVHLKNTSRGNTGNRNYRM. Residues 119–153 form a disordered region; sequence RSVRAQRHTDMPKAQKEVHLKNTSRGNTGNRNYRM. The span at 125 to 138 shows a compositional bias: basic and acidic residues; that stretch reads RHTDMPKAQKEVHL. The span at 139-153 shows a compositional bias: polar residues; sequence KNTSRGNTGNRNYRM.

This sequence belongs to the insulin family. Forms a ternary complex with IGFR1 and ITGAV:ITGB3. Forms a ternary complex with IGFR1 and ITGA6:ITGB4. Forms a ternary complex with IGFBP3 and ALS.

It localises to the secreted. Functionally, the insulin-like growth factors, isolated from plasma, are structurally and functionally related to insulin but have a much higher growth-promoting activity. Acts as a ligand for IGF1R. Binds to the alpha subunit of IGF1R, leading to the activation of the intrinsic tyrosine kinase activity which autophosphorylates tyrosine residues in the beta subunit thus initiatiating a cascade of down-stream signaling events leading to activation of the PI3K-AKT/PKB and the Ras-MAPK pathways. Binds to integrins. Its binding to integrins and subsequent ternary complex formation with integrins and IGFR1 are essential for IGF1 signaling. This chain is Insulin-like growth factor 1, found in Gallus gallus (Chicken).